Reading from the N-terminus, the 377-residue chain is Homoserine O-succinyltransferase (377 aa).

An AB hydrolase-1 domain is found at 50 to 358; the sequence is NAVLICHALS…PSSYGHDSFL (309 aa). Catalysis depends on serine 156, which acts as the Nucleophile. Residue arginine 226 coordinates substrate. Residues aspartate 321 and histidine 354 contribute to the active site. Aspartate 355 contacts substrate.

It belongs to the AB hydrolase superfamily. MetX family. In terms of assembly, homodimer.

Its subcellular location is the cytoplasm. The enzyme catalyses L-homoserine + succinyl-CoA = O-succinyl-L-homoserine + CoA. The protein operates within amino-acid biosynthesis; L-methionine biosynthesis via de novo pathway; O-succinyl-L-homoserine from L-homoserine: step 1/1. Functionally, transfers a succinyl group from succinyl-CoA to L-homoserine, forming succinyl-L-homoserine. This is Homoserine O-succinyltransferase from Nitrosomonas europaea (strain ATCC 19718 / CIP 103999 / KCTC 2705 / NBRC 14298).